Here is an 815-residue protein sequence, read N- to C-terminus: RNA-binding protein 5 (815 aa).

A disordered region spans residues 1–93 (MGSDKRVSRT…EHDYRHDISD (93 aa)). 5 positions are modified to phosphoserine: S18, S59, S69, S72, and S78. An RRM 1 domain is found at 98–178 (KTIMLRGLPI…KHIAMHYSNP (81 aa)). A RanBP2-type zinc finger spans residues 181-210 (KFEDWLCNKCCLNNFRKRLKCFRCGADKFD). The region spanning 231–315 (DTIILRNIAP…KTIGVDFAKS (85 aa)) is the RRM 2 domain. A required for interaction with U2AF2 region spans residues 321–809 (VLSDGNRVSA…KDAVRKAMFA (489 aa)). Positions 411-422 (QSPQLYNQTSNP) are enriched in polar residues. Disordered stretches follow at residues 411–468 (QSPQ…DESS) and 507–540 (PAAE…AQQI). Residues 426–446 (PTEEAQPSTSTSTQAPAASPT) are compositionally biased toward low complexity. A Phosphoserine modification is found at S444. The segment at 452-535 (TKYAVPDTST…KEKKEKPKSK (84 aa)) is sufficient for interaction with ACIN1, PRPF8, SFRS3, SNRPB, SNRPN, SNRNP70 and SNRNP200. Residues S621 and S624 each carry the phosphoserine modification. A C2H2-type; atypical zinc finger spans residues 647-677 (MACLLCRRQFPNKDALVRHQQLSDLHKQNMD). Residues 743–789 (HSNIGNKMLQAMGWREGSGLGRKCQGITAPIEAQVRLKGAGLGAKGS) form the G-patch domain.

It belongs to the RBM5/RBM10 family. In terms of assembly, component of the spliceosome A complex (also known as the prespliceosome). Appears to dissociate from the spliceosome upon formation of the spliceosome B complex (also known as the precatalytic spliceosome), in which the heterotrimeric U4/U6.U5 snRNPs are bound. Interacts with U2AF2; this interaction is direct. Also interacts with ACIN1, PRPF8, SFRS3, SNRPB, SNRPN, SNRNP70 and SNRNP200; these interactions may be indirect. In terms of tissue distribution, isoform 5 is widely expressed in normal tissues and is expressed at increased levels in T-leukemic cell lines.

It localises to the nucleus. Functionally, component of the spliceosome A complex. Binds to ssRNA containing the consensus sequence 5'-AGGUAA-3'. Regulates alternative splicing of a number of mRNAs. May modulate splice site pairing after recruitment of the U1 and U2 snRNPs to the 5' and 3' splice sites of the intron. May both positively and negatively regulate apoptosis by regulating the alternative splicing of several genes involved in this process, including FAS and CASP2/caspase-2. In the case of FAS, promotes exclusion of exon 6 thereby producing a soluble form of FAS that inhibits apoptosis. In the case of CASP2/caspase-2, promotes exclusion of exon 9 thereby producing a catalytically active form of CASP2/Caspase-2 that induces apoptosis. This chain is RNA-binding protein 5 (RBM5), found in Homo sapiens (Human).